We begin with the raw amino-acid sequence, 85 residues long: Large ribosomal subunit protein bL27 (85 aa).

Residues 1 to 22 form a disordered region; sequence MAHKKAGGSTRNGRDSEAKRMG.

It belongs to the bacterial ribosomal protein bL27 family.

This is Large ribosomal subunit protein bL27 from Escherichia coli O6:K15:H31 (strain 536 / UPEC).